A 1232-amino-acid chain; its full sequence is DNA topoisomerase 2 (1232 aa).

Residues asparagine 65, asparagine 94, 122-124, 135-142, and 352-354 contribute to the ATP site; these read SSN, GRHGYGAK, and QNK. Residues 432-546 enclose the Toprim domain; it reads RTLIVTEGDS…SLLNRNPGFI (115 aa). The Mg(2+) site is built by glutamate 438, aspartate 515, and aspartate 517. A Topo IIA-type catalytic domain is found at 681 to 1097; sequence LAHAVDGLKP…APVQMWLDEL (417 aa). Tyrosine 771 serves as the catalytic O-(5'-phospho-DNA)-tyrosine intermediate. An interaction with DNA region spans residues 952 to 961; the sequence is SLTQRIYING. Residues 1161-1184 form a disordered region; sequence YVPPPPSKRPHVGQSVGGGGGGGS. The span at 1175–1184 shows a compositional bias: gly residues; it reads SVGGGGGGGS.

Belongs to the type II topoisomerase family. Homodimer. It depends on Mg(2+) as a cofactor. Mn(2+) is required as a cofactor. The cofactor is Ca(2+).

Its subcellular location is the nucleus. It carries out the reaction ATP-dependent breakage, passage and rejoining of double-stranded DNA.. Its function is as follows. Control of topological states of DNA by transient breakage and subsequent rejoining of DNA strands. Topoisomerase II makes double-strand breaks. The protein is DNA topoisomerase 2 (TOP2) of Trypanosoma cruzi.